A 781-amino-acid polypeptide reads, in one-letter code: Toll-like receptor 2 type-2 (781 aa).

The signal sequence occupies residues 1–24 (MHTWKMWAICTALAAHLPEEQALR). Over 25–585 (QACLSCDATQ…QLSLMECHRS (561 aa)) the chain is Extracellular. C30 and C36 are joined by a disulfide. N37 carries N-linked (GlcNAc...) asparagine glycosylation. LRR repeat units lie at residues 53-74 (KITV…DLQK), 77-98 (NLRT…SFGS), 101-122 (KLEL…WFGP), 125-146 (SLQH…SPFS), 150-171 (NLSS…NFEG), and 174-195 (FLNT…SLKS). An N-linked (GlcNAc...) asparagine glycan is attached at N109. N-linked (GlcNAc...) asparagine glycosylation is found at N150, N184, N301, and N313. A disulfide bridge connects residues C350 and C379. LRR repeat units lie at residues 358 to 378 (SLEY…EHSA), 385 to 406 (SLQT…GKSL), 411 to 432 (NLNL…CEWP), 434 to 455 (NLKY…IPST), 456 to 474 (LEVL…LQLP), 475 to 496 (FLKE…TDIP), and 497 to 518 (NLVA…EFES). N-linked (GlcNAc...) asparagine glycosylation occurs at N390. An intrachain disulfide couples C429 to C451. N439 is a glycosylation site (N-linked (GlcNAc...) asparagine). The 55-residue stretch at 530–584 (NNFICSCEFLSFIHHEAGIAQVLVGWPESYICDSPLTVRGAQVGSVQLSLMECHR) folds into the LRRCT domain. Residues 586-606 (LLVSLICTLVFLFILILVVVG) form a helical membrane-spanning segment. Residues 607–781 (YKYHAVWYMR…WENLKAALKS (175 aa)) are Cytoplasmic-facing. A TIR domain is found at 636 to 779 (ICYDAFVSYS…MFWENLKAAL (144 aa)).

This sequence belongs to the Toll-like receptor family. Binds MYD88 (via TIR domain). Post-translationally, N-glycosylated. Highly expressed in ovary. Also detected in brain, heart, lung, liver, spleen and kidney, and at low levels in gizzard, muscle, testis and proventriculus.

The protein resides in the membrane. Participates in the innate immune response to microbial agents. Acts via MYD88 and TRAF6, leading to NF-kappa-B activation, cytokine secretion and the inflammatory response. Mediates the response to mycoplasmal macrophage-activating lipopeptide-2kD (MALP-2). In Gallus gallus (Chicken), this protein is Toll-like receptor 2 type-2 (TLR2-2).